The following is a 225-amino-acid chain: Phosphoribosyltransferase domain-containing protein 1 (225 aa).

A2 carries the N-acetylalanine modification. Residues E141 and D142 each contribute to the Mg(2+) site. GMP is bound by residues 141–149 (EDVVGTGRT), K173, 194–195 (FV), and D201. D201 lines the Mg(2+) pocket.

It belongs to the purine/pyrimidine phosphoribosyltransferase family. In terms of assembly, homodimer.

Its function is as follows. Has low, barely detectable phosphoribosyltransferase activity (in vitro). Binds GMP, IMP and alpha-D-5-phosphoribosyl 1-pyrophosphate (PRPP). Is not expected to contribute to purine metabolism or GMP salvage. The sequence is that of Phosphoribosyltransferase domain-containing protein 1 (PRTFDC1) from Homo sapiens (Human).